The sequence spans 348 residues: D-alanine--D-alanine ligase (348 aa).

In terms of domain architecture, ATP-grasp spans 132-334 (KRVLESIGIP…YPDLIEVLVT (203 aa)). Position 162–217 (162–217 (LARLTFPIFVKPANMGSSVGISKAQTKVELRKAIQLALTYDSRVLIEQGVVAREIE)) interacts with ATP. Mg(2+) contacts are provided by Asp288, Glu301, and Asn303.

The protein belongs to the D-alanine--D-alanine ligase family. Mg(2+) is required as a cofactor. Requires Mn(2+) as cofactor.

It localises to the cytoplasm. It catalyses the reaction 2 D-alanine + ATP = D-alanyl-D-alanine + ADP + phosphate + H(+). It functions in the pathway cell wall biogenesis; peptidoglycan biosynthesis. In terms of biological role, cell wall formation. This Streptococcus pyogenes serotype M2 (strain MGAS10270) protein is D-alanine--D-alanine ligase.